A 388-amino-acid polypeptide reads, in one-letter code: DNA ADP-ribosyl transferase-DNA ADP-ribosyl glycohydrolase fusion protein (388 aa).

A DarT domain is found at 6-197; sequence RELYYITHID…PVIPDPTFFF (192 aa). Residues 10-12 and arginine 50 contribute to the NAD(+) site; that span reads YIT. Positions 34-52 are NAD(+)-binding element; sequence QSINCKKVYDNSIVLKRKS. Arginine 50 (proton acceptor) is an active-site residue. The interval 107–152 is ADP-ribosylating turn-turn loop; it reads TDGNAASSETQIYRKSEIKNIKNIISVKDMEYWREEDGSKRKIMAE. Glutamate 152 is a catalytic residue. A Macro domain is found at 196–376; the sequence is FFLPNREIKL…IYLPLEKRIP (181 aa). ADP-D-ribose is bound by residues 215–216, 227–229, threonine 301, 339–343, and 371–372; these read DM, SVN, GCGLG, and LE.

It in the N-terminal section; belongs to the DarT ADP-ribosyltransferase family. The protein in the C-terminal section; belongs to the DarG ADP-ribosyl glycohydrolase family.

It carries out the reaction an N-(ADP-alpha-D-ribosyl)-thymidine in DNA + H2O = a thymidine in DNA + ADP-D-ribose. The catalysed reaction is a thymidine in DNA + NAD(+) = an N-(ADP-alpha-D-ribosyl)-thymidine in DNA + nicotinamide + H(+). Its function is as follows. A fusion protein of the toxic and antitoxin components of a hybrid type II/IV toxin-antitoxin (TA) system. The N-terminal domain ADP-ribosylates ssDNA on a thymidine residue, while the C-terminal domain removes the modification, neutralizing the toxic effect. The polypeptide is DNA ADP-ribosyl transferase-DNA ADP-ribosyl glycohydrolase fusion protein (Thermosipho africanus (strain H17ap60334)).